The chain runs to 502 residues: Large ribosomal subunit protein uL2m (502 aa).

Residues 458–502 (AMNPVDHPHGGGEGRTKGGRPSVSPWGKPTKAGFRAGVGVGKRRI) form a disordered region. Over residues 463 to 473 (DHPHGGGEGRT) the composition is skewed to basic and acidic residues. Positions 493-502 (AGVGVGKRRI) are enriched in gly residues.

Belongs to the universal ribosomal protein uL2 family.

It localises to the mitochondrion. The protein is Large ribosomal subunit protein uL2m (RPL2) of Oryza sativa (Rice).